The following is a 384-amino-acid chain: MAKVAALIVAAGRGKRFGGDLPKQYQTLGGRPILRHTLARFAAHPDVALVRAIIHPEDRDLYGAAAHGLATLLDAVEGGAERQDSVRLGLESLTDVAPDYVLIHDGARPLVDGALIDRVIAALADHPGAIPALAVADTLKRGAGGMIGQTVDRAGLWRAQTPQGFRYDAILAAHRAQAGTMLTDDAAVLEAAGGAVALVDGAEDNAKITTFADLERAERLFRGEGEQRIGSGFDVHRLGPGDFVTLNGIRIPHSHGLVGHSDADAPMHALTDALLGCLNAGDIGRHFPPSDMRWKGADSAIFLRHAAALITALGGRILNVDITILCEQPKIGPHRARMSARLAEILEISATRVAVKATTTEELGFTGRGEGIAAQATALITLPF.

2 2-C-methyl-D-erythritol 4-phosphate cytidylyltransferase regions span residues 1-227 (MAKV…EGEQ) and 1-228 (MAKV…GEQR). The segment at 228–384 (RIGSGFDVHR…QATALITLPF (157 aa)) is 2-C-methyl-D-erythritol 2,4-cyclodiphosphate synthase. Residues Asp-234 and His-236 each contribute to the a divalent metal cation site. 4-CDP-2-C-methyl-D-erythritol 2-phosphate is bound by residues 234-236 (DVH) and 260-261 (HS). His-268 serves as a coordination point for a divalent metal cation. 4-CDP-2-C-methyl-D-erythritol 2-phosphate contacts are provided by residues 282 to 284 (DIG), 358 to 361 (TTTE), Phe-365, and Arg-368.

This sequence in the N-terminal section; belongs to the IspD/TarI cytidylyltransferase family. IspD subfamily. In the C-terminal section; belongs to the IspF family. It depends on a divalent metal cation as a cofactor.

The enzyme catalyses 2-C-methyl-D-erythritol 4-phosphate + CTP + H(+) = 4-CDP-2-C-methyl-D-erythritol + diphosphate. The catalysed reaction is 4-CDP-2-C-methyl-D-erythritol 2-phosphate = 2-C-methyl-D-erythritol 2,4-cyclic diphosphate + CMP. It functions in the pathway isoprenoid biosynthesis; isopentenyl diphosphate biosynthesis via DXP pathway; isopentenyl diphosphate from 1-deoxy-D-xylulose 5-phosphate: step 2/6. Its pathway is isoprenoid biosynthesis; isopentenyl diphosphate biosynthesis via DXP pathway; isopentenyl diphosphate from 1-deoxy-D-xylulose 5-phosphate: step 4/6. Its function is as follows. Bifunctional enzyme that catalyzes the formation of 4-diphosphocytidyl-2-C-methyl-D-erythritol from CTP and 2-C-methyl-D-erythritol 4-phosphate (MEP) (IspD), and catalyzes the conversion of 4-diphosphocytidyl-2-C-methyl-D-erythritol 2-phosphate (CDP-ME2P) to 2-C-methyl-D-erythritol 2,4-cyclodiphosphate (ME-CPP) with a corresponding release of cytidine 5-monophosphate (CMP) (IspF). The protein is Bifunctional enzyme IspD/IspF of Rhodospirillum rubrum (strain ATCC 11170 / ATH 1.1.1 / DSM 467 / LMG 4362 / NCIMB 8255 / S1).